Reading from the N-terminus, the 542-residue chain is MKRTRRALPANYDPVYPYDAPGSSTQPPFFNNKQGLTESPPGTLAVNVSPPLTFSTLGAIKLSTGPGLTLNEGKLQASLGPGLITNTEGQITVENVNKVLSFTSPLHKNENTVSLALGDGLEDENGTLKVTFPTPPPPLQFSPPLTKTGGTVSLPLQDSMQVTNGKLGVKPTTYAPPLKKTDQQVSLQVGSGLTVINEQLQAVQPPATTYNEPLSKTDNSVSLQVGAGLAVQSGALVATPPPPLTFTSPLEKNENTVSLQVGAGLSVQNNALVATPPPPLTFAYPLVKNDNHVALSAGSGLRISGGSLTVATGPGLSHQNGTIGAVVGAGLKFENNAILAKLGNGLTIRDGAIEATQPPAAPITLWTGPGPSINGFINDTPVIRCFICLTRDSNLVTVNASFVGEGGYRIVSPTQSQFSLIMEFDQFGQLMSTGNINSTTTWGEKPWGNNTVQPRPSHTWKLCMPNREVYSTPAATISRCGLDSIAVDGAPSRSIDCMLIINKPKGVATYTLTFRFLNFNRLSGGTLFKTDVLTFTYVGENQ.

The disordered stretch occupies residues 1-24; it reads MKRTRRALPANYDPVYPYDAPGSS.

The protein belongs to the adenoviridae fiber family. Homotrimer. Interacts (via N-terminal tail region) with pentons.

Its subcellular location is the virion. It localises to the host nucleus. In terms of biological role, forms spikes that protrude from each vertex of the icosahedral capsid. Interacts with host receptor to provide virion initial attachment to target cell. Fiber proteins are shed during virus entry, when virus is still at the cell surface. The chain is Fiber protein from Canine adenovirus serotype 2 (strain Toronto A 26-61) (CAdV-2).